A 230-amino-acid chain; its full sequence is 6-carboxyhexanoate--CoA ligase (230 aa).

This sequence belongs to the BioW family. In terms of assembly, homodimer. Mg(2+) serves as cofactor.

The enzyme catalyses heptanedioate + ATP + CoA = 6-carboxyhexanoyl-CoA + AMP + diphosphate. It functions in the pathway metabolic intermediate metabolism; pimeloyl-CoA biosynthesis; pimeloyl-CoA from pimelate: step 1/1. Its function is as follows. Catalyzes the transformation of pimelate into pimeloyl-CoA with concomitant hydrolysis of ATP to AMP. This is 6-carboxyhexanoate--CoA ligase from Staphylococcus aureus (strain MSSA476).